The sequence spans 203 residues: Ribosomal RNA small subunit methyltransferase G (203 aa).

S-adenosyl-L-methionine contacts are provided by residues Gly-73, Leu-78, 124-125 (VE), and Arg-138.

This sequence belongs to the methyltransferase superfamily. RNA methyltransferase RsmG family.

It localises to the cytoplasm. It carries out the reaction guanosine(527) in 16S rRNA + S-adenosyl-L-methionine = N(7)-methylguanosine(527) in 16S rRNA + S-adenosyl-L-homocysteine. In terms of biological role, specifically methylates the N7 position of guanine in position 527 of 16S rRNA. The polypeptide is Ribosomal RNA small subunit methyltransferase G (Glaesserella parasuis serovar 5 (strain SH0165) (Haemophilus parasuis)).